The primary structure comprises 416 residues: Floricaula/leafy homolog 2 (416 aa).

The segment at Glu-154–Gln-237 is disordered. The span at Ala-210–Asn-225 shows a compositional bias: acidic residues. 3 consecutive DNA-binding regions follow at residues Arg-238–Phe-242, Asn-307–Tyr-314, and Tyr-378–Thr-381.

It belongs to the FLO/LFY family. Expressed in floral meristems and in indeterminate vegetative meristems.

It localises to the nucleus. Its function is as follows. Probable transcription factor that act to specify determinacy in the progenitor cells for both flowers and leaves. This is Floricaula/leafy homolog 2 (FL2) from Nicotiana tabacum (Common tobacco).